We begin with the raw amino-acid sequence, 369 residues long: Arsenite methyltransferase (369 aa).

Serine 46 carries the post-translational modification Phosphoserine.

It belongs to the methyltransferase superfamily. Arsenite methyltransferase family.

Its subcellular location is the cytoplasm. The protein resides in the cytosol. The catalysed reaction is arsenic triglutathione + [thioredoxin]-dithiol + S-adenosyl-L-methionine + 2 H2O = methylarsonous acid + [thioredoxin]-disulfide + 3 glutathione + S-adenosyl-L-homocysteine + H(+). The enzyme catalyses arsenic triglutathione + 2 [thioredoxin]-dithiol + 2 S-adenosyl-L-methionine + H2O = dimethylarsinous acid + 2 [thioredoxin]-disulfide + 3 glutathione + 2 S-adenosyl-L-homocysteine + 2 H(+). It catalyses the reaction arsenic triglutathione + 3 [thioredoxin]-dithiol + 3 S-adenosyl-L-methionine = trimethylarsine + 3 [thioredoxin]-disulfide + 3 glutathione + 3 S-adenosyl-L-homocysteine + 3 H(+). Catalyzes the transfer of a methyl group from AdoMet to trivalent arsenicals producing methylated and dimethylated arsenicals. It methylates arsenite to form methylarsonate, Me-AsO(3)H(2), which is reduced by methylarsonate reductase to methylarsonite, Me-As(OH)2. Methylarsonite is also a substrate and it is converted into the much less toxic compound dimethylarsinate (cacodylate), Me(2)As(O)-OH. The chain is Arsenite methyltransferase (As3mt) from Rattus norvegicus (Rat).